The primary structure comprises 51 residues: Large ribosomal subunit protein eL39 (51 aa).

The protein belongs to the eukaryotic ribosomal protein eL39 family.

The sequence is that of Large ribosomal subunit protein eL39 from Thermococcus sibiricus (strain DSM 12597 / MM 739).